Consider the following 854-residue polypeptide: MADWLLLIPWNKIFTAACGCFFSDRNYIHKMEANLDDLHTTMEELKNGRDDLLRRVSIEEDKGLQQLAQVKGWISRVEIVESRFKDLLEDKSTETGRLCLFGFCSENCISSYNYGEKVMKNLEEVKELLSKKHFEVVAHKIPVPKVEEKNIHTTVGLYAMVEMAWKSLMNDEIRTLCLHGMGGVGKTTLLACINNKFVELESEFDVVIWVVVSKDFQLEGIQDQILGRLRLDKEWERETENKKASLINNNLKRKKFVLLLDDLWSEVDLNKIGVPPPTRENGAKIVFTKRSKEVSKYMKADMQIKVSCLSPDEAWELFRITVDDVILSSHEDIPALARIVAAKCHGLPLALIVIGEAMACKETIQEWHHAINVLNSPAGHKFPGMEERILLVLKFSYDSLKNGEIKLCFLYCSLFPEDFEIEKEKLIEYWICEGYINPNRYEDGGTNQGYDIIGLLVRAHLLIECELTTKVKMHYVIREMALWINSDFGKQQETICVKSGAHVRMIPNDINWEIVRQVSLISTQIEKISCSSKCSNLSTLLLPYNKLVNISVGFFLFMPKLVVLDLSTNMSLIELPEEISNLCSLQYLNLSSTGIKSLPGGMKKLRKLIYLNLEFSYKLESLVGISATLPNLQVLKLFYSNVCVDDILMEELQHMDHLKILTVTIDDAMILERIQGIDRLASSIRGLCLTNMSAPRVVLSTTALGGLQQLAILSCNISEIKMDWKSKERREVSPMEIHPSTSTSSPGFKQLSSVNIMKLVGPRDLSWLLFAQNLKSLHVGFSPEIEEIINKEKGSSITKEIAFGKLESLVIYKLPELKEICWNYRTLPNSRYFDVKDCPKLPEDIANFPMHAEE.

Positions 25–62 form a coiled coil; the sequence is RNYIHKMEANLDDLHTTMEELKNGRDDLLRRVSIEEDK. The 304-residue stretch at 138–441 folds into the NB-ARC domain; sequence AHKIPVPKVE…CEGYINPNRY (304 aa). 180 to 187 contacts ATP; the sequence is GMGGVGKT. LRR repeat units follow at residues 514 to 535, 536 to 557, 560 to 582, 584 to 605, 607 to 629, and 631 to 652; these read IVRQ…SKCS, NLST…FFLF, KLVV…ISNL, SLQY…MKKL, KLIY…SATL, and NLQV…MEEL.

This sequence belongs to the disease resistance NB-LRR family.

Functionally, probable disease resistance protein. The sequence is that of Probable disease resistance protein At1g51480 from Arabidopsis thaliana (Mouse-ear cress).